The primary structure comprises 234 residues: GTP:AMP phosphotransferase, mitochondrial (234 aa).

A GTP-binding site is contributed by G24 to T29. The interval S45–L74 is NMP. AMP-binding positions include S46, R51, K72 to L74, G103 to R106, and Q110. Residues N144–D181 form an LID region. Residues R145 and V154 to Y155 each bind GTP. AMP is bound by residues R178 and R189. S218 is a binding site for GTP.

It belongs to the adenylate kinase family. AK3 subfamily. In terms of assembly, monomer.

The protein localises to the mitochondrion matrix. It carries out the reaction a ribonucleoside 5'-triphosphate + AMP = a ribonucleoside 5'-diphosphate + ADP. Functionally, involved in maintaining the homeostasis of cellular nucleotides by catalyzing the interconversion of nucleoside phosphates. Has GTP:AMP phosphotransferase and ITP:AMP phosphotransferase activities. Does not accept ATP as phosphate donor. This chain is GTP:AMP phosphotransferase, mitochondrial, found in Saccharomyces cerevisiae (Baker's yeast).